A 507-amino-acid polypeptide reads, in one-letter code: Glycerol kinase (507 aa).

Thr14 contributes to the ADP binding site. Residues Thr14, Thr15, and Ser16 each coordinate ATP. Thr14 contacts sn-glycerol 3-phosphate. ADP is bound at residue Arg18. 4 residues coordinate sn-glycerol 3-phosphate: Arg84, Glu85, Tyr136, and Asp246. Residues Arg84, Glu85, Tyr136, Asp246, and Gln247 each contribute to the glycerol site. 2 residues coordinate ADP: Thr268 and Gly311. 4 residues coordinate ATP: Thr268, Gly311, Gln315, and Gly412. ADP is bound by residues Gly412 and Asn416.

This sequence belongs to the FGGY kinase family.

It catalyses the reaction glycerol + ATP = sn-glycerol 3-phosphate + ADP + H(+). Its pathway is polyol metabolism; glycerol degradation via glycerol kinase pathway; sn-glycerol 3-phosphate from glycerol: step 1/1. Its activity is regulated as follows. Inhibited by fructose 1,6-bisphosphate (FBP). Functionally, key enzyme in the regulation of glycerol uptake and metabolism. Catalyzes the phosphorylation of glycerol to yield sn-glycerol 3-phosphate. The sequence is that of Glycerol kinase from Vibrio atlanticus (strain LGP32) (Vibrio splendidus (strain Mel32)).